The primary structure comprises 688 residues: Eukaryotic translation initiation factor 3 subunit B (688 aa).

The segment at 1-43 (MLESERPERDMEEEGEESNEEEEEEGMSFSDPEGFEDDISDEE) is disordered. Composition is skewed to acidic residues over residues 10–26 (DMEE…EEEG) and 33–43 (EGFEDDISDEE). The RRM domain occupies 61 to 144 (SVIVVDNVPQ…HTFRVNLFTD (84 aa)). 8 WD repeats span residues 164–206 (KDFG…VPVE), 208–246 (RARW…QIQR), 248–293 (SHQG…NKRG), 297–335 (ESSA…LLDK), 338–373 (LKIT…TLMQ), 436–492 (EMKD…TIFW), 525–570 (AEHY…LQKN), and 635–680 (TYRE…FFVT). The stretch at 589–640 (SQDQIKQIKKDLKKYSKIFEQKDRLSQTKASKELIERRRAMMEEYKTYREMA) forms a coiled coil.

This sequence belongs to the eIF-3 subunit B family. As to quaternary structure, component of the eukaryotic translation initiation factor 3 (eIF-3) complex, which is composed of 13 subunits: eif3a, eif3b, eif3c, eif3d, eif3e, eif3f, eif3g, eif3h, eif3i, eif3j, eif3k, eif3l and eif3m.

Its subcellular location is the cytoplasm. The protein localises to the stress granule. Its function is as follows. RNA-binding component of the eukaryotic translation initiation factor 3 (eIF-3) complex, which is involved in protein synthesis of a specialized repertoire of mRNAs and, together with other initiation factors, stimulates binding of mRNA and methionyl-tRNAi to the 40S ribosome. The eIF-3 complex specifically targets and initiates translation of a subset of mRNAs involved in cell proliferation. This Xenopus laevis (African clawed frog) protein is Eukaryotic translation initiation factor 3 subunit B (eif3b).